We begin with the raw amino-acid sequence, 503 residues long: Probable cytosol aminopeptidase (503 aa).

Mn(2+)-binding residues include Lys-270 and Asp-275. The active site involves Lys-282. Positions 293, 352, and 354 each coordinate Mn(2+). Residue Arg-356 is part of the active site.

It belongs to the peptidase M17 family. Mn(2+) serves as cofactor.

The protein resides in the cytoplasm. It carries out the reaction Release of an N-terminal amino acid, Xaa-|-Yaa-, in which Xaa is preferably Leu, but may be other amino acids including Pro although not Arg or Lys, and Yaa may be Pro. Amino acid amides and methyl esters are also readily hydrolyzed, but rates on arylamides are exceedingly low.. The catalysed reaction is Release of an N-terminal amino acid, preferentially leucine, but not glutamic or aspartic acids.. Its function is as follows. Presumably involved in the processing and regular turnover of intracellular proteins. Catalyzes the removal of unsubstituted N-terminal amino acids from various peptides. This chain is Probable cytosol aminopeptidase, found in Klebsiella pneumoniae subsp. pneumoniae (strain ATCC 700721 / MGH 78578).